The primary structure comprises 255 residues: Sugar fermentation stimulation protein homolog (255 aa).

This sequence belongs to the SfsA family.

In Synechococcus sp. (strain WH7803), this protein is Sugar fermentation stimulation protein homolog.